The primary structure comprises 729 residues: Fatty acid oxidation complex subunit alpha (729 aa).

An enoyl-CoA hydratase/isomerase region spans residues 1–189; sequence MLYKGDTLYL…KIGLVDGVVK (189 aa). A substrate-binding site is contributed by D296. Residues 311–729 form a 3-hydroxyacyl-CoA dehydrogenase region; it reads ETPKQAAVLG…ARPVGDLKTA (419 aa). NAD(+) contacts are provided by residues M324, D343, 400 to 402, K407, and S429; that span reads VVE. H450 (for 3-hydroxyacyl-CoA dehydrogenase activity) is an active-site residue. N453 contacts NAD(+). 2 residues coordinate substrate: N500 and Y660. A disordered region spans residues 708 to 729; the sequence is RHNEPYYPPVEPARPVGDLKTA.

This sequence in the N-terminal section; belongs to the enoyl-CoA hydratase/isomerase family. The protein in the C-terminal section; belongs to the 3-hydroxyacyl-CoA dehydrogenase family. In terms of assembly, heterotetramer of two alpha chains (FadB) and two beta chains (FadA).

The enzyme catalyses a (3S)-3-hydroxyacyl-CoA + NAD(+) = a 3-oxoacyl-CoA + NADH + H(+). It carries out the reaction a (3S)-3-hydroxyacyl-CoA = a (2E)-enoyl-CoA + H2O. It catalyses the reaction a 4-saturated-(3S)-3-hydroxyacyl-CoA = a (3E)-enoyl-CoA + H2O. The catalysed reaction is (3S)-3-hydroxybutanoyl-CoA = (3R)-3-hydroxybutanoyl-CoA. The enzyme catalyses a (3Z)-enoyl-CoA = a 4-saturated (2E)-enoyl-CoA. It carries out the reaction a (3E)-enoyl-CoA = a 4-saturated (2E)-enoyl-CoA. Its pathway is lipid metabolism; fatty acid beta-oxidation. Functionally, involved in the aerobic and anaerobic degradation of long-chain fatty acids via beta-oxidation cycle. Catalyzes the formation of 3-oxoacyl-CoA from enoyl-CoA via L-3-hydroxyacyl-CoA. It can also use D-3-hydroxyacyl-CoA and cis-3-enoyl-CoA as substrate. The chain is Fatty acid oxidation complex subunit alpha from Escherichia coli (strain UTI89 / UPEC).